Reading from the N-terminus, the 129-residue chain is Glycine cleavage system H protein (129 aa).

The region spanning 24–106 (LIRVGISAFA…HGAGWLLVVR (83 aa)) is the Lipoyl-binding domain. Position 65 is an N6-lipoyllysine (Lys65).

Belongs to the GcvH family. The glycine cleavage system is composed of four proteins: P, T, L and H. (R)-lipoate serves as cofactor.

Functionally, the glycine cleavage system catalyzes the degradation of glycine. The H protein shuttles the methylamine group of glycine from the P protein to the T protein. This chain is Glycine cleavage system H protein, found in Synechococcus sp. (strain CC9902).